Reading from the N-terminus, the 516-residue chain is Cytochrome P450 1A2 (516 aa).

S69 carries O-linked (GlcNAc) serine glycosylation. Substrate is bound at residue F226. C458 provides a ligand contact to heme.

This sequence belongs to the cytochrome P450 family. In terms of assembly, interacts with PGRMC1; the interaction requires PGRMC1 homodimerization. It depends on heme as a cofactor.

It is found in the endoplasmic reticulum membrane. Its subcellular location is the microsome membrane. The catalysed reaction is an organic molecule + reduced [NADPH--hemoprotein reductase] + O2 = an alcohol + oxidized [NADPH--hemoprotein reductase] + H2O + H(+). It catalyses the reaction 17beta-estradiol + reduced [NADPH--hemoprotein reductase] + O2 = 2-hydroxy-17beta-estradiol + oxidized [NADPH--hemoprotein reductase] + H2O + H(+). It carries out the reaction 17beta-estradiol + reduced [NADPH--hemoprotein reductase] + O2 = 4-hydroxy-17beta-estradiol + oxidized [NADPH--hemoprotein reductase] + H2O + H(+). The enzyme catalyses estrone + reduced [NADPH--hemoprotein reductase] + O2 = 2-hydroxyestrone + oxidized [NADPH--hemoprotein reductase] + H2O + H(+). The catalysed reaction is estrone + reduced [NADPH--hemoprotein reductase] + O2 = 4-hydroxyestrone + oxidized [NADPH--hemoprotein reductase] + H2O + H(+). It catalyses the reaction cholesterol + reduced [NADPH--hemoprotein reductase] + O2 = 25-hydroxycholesterol + oxidized [NADPH--hemoprotein reductase] + H2O + H(+). It carries out the reaction all-trans-retinol + reduced [NADPH--hemoprotein reductase] + O2 = all-trans-retinal + oxidized [NADPH--hemoprotein reductase] + 2 H2O + H(+). The enzyme catalyses all-trans-retinal + reduced [NADPH--hemoprotein reductase] + O2 = all-trans-retinoate + oxidized [NADPH--hemoprotein reductase] + H2O + 2 H(+). The catalysed reaction is (5Z,8Z,11Z,14Z)-eicosatetraenoate + reduced [NADPH--hemoprotein reductase] + O2 = (14R,15S)-epoxy-(5Z,8Z,11Z)-eicosatrienoate + oxidized [NADPH--hemoprotein reductase] + H2O + H(+). It catalyses the reaction (5Z,8Z,11Z,14Z)-eicosatetraenoate + reduced [NADPH--hemoprotein reductase] + O2 = (14S,15R)-epoxy-(5Z,8Z,11Z)-eicosatrienoate + oxidized [NADPH--hemoprotein reductase] + H2O + H(+). It carries out the reaction (5Z,8Z,11Z,14Z,17Z)-eicosapentaenoate + reduced [NADPH--hemoprotein reductase] + O2 = (17R,18S)-epoxy-(5Z,8Z,11Z,14Z)-eicosatetraenoate + oxidized [NADPH--hemoprotein reductase] + H2O + H(+). The enzyme catalyses (4Z,7Z,10Z,13Z,16Z,19Z)-docosahexaenoate + reduced [NADPH--hemoprotein reductase] + O2 = (19R,20S)-epoxy-(4Z,7Z,10Z,13Z,16Z)-docosapentaenoate + oxidized [NADPH--hemoprotein reductase] + H2O + H(+). The catalysed reaction is (5S)-hydroperoxy-(6E,8Z,11Z,14Z)-eicosatetraenoate = 5-oxo-(6E,8Z,11Z,14Z)-eicosatetraenoate + H2O. It catalyses the reaction (12S)-hydroperoxy-(5Z,8Z,10E,14Z)-eicosatetraenoate = 12-oxo-(5Z,8Z,10E,14Z)-eicosatetraenoate + H2O. It carries out the reaction (15S)-hydroperoxy-(5Z,8Z,11Z,13E)-eicosatetraenoate = 15-oxo-(5Z,8Z,11Z,13E)-eicosatetraenoate + H2O. The enzyme catalyses (13S)-hydroperoxy-(9Z,11E)-octadecadienoate = 13-oxo-(9Z,11E)-octadecadienoate + H2O. The catalysed reaction is (5Z,8Z,11Z,14Z)-eicosatetraenoate + reduced [NADPH--hemoprotein reductase] + O2 = 13-hydroxy-(5Z,8Z,11Z,14Z)-eicosatetraenoate + oxidized [NADPH--hemoprotein reductase] + H2O + H(+). It catalyses the reaction (5Z,8Z,11Z,14Z)-eicosatetraenoate + reduced [NADPH--hemoprotein reductase] + O2 = 19-hydroxy-(5Z,8Z,11Z,14Z)-eicosatetraenoate + oxidized [NADPH--hemoprotein reductase] + H2O + H(+). It carries out the reaction (9Z,12Z)-octadecadienoate + reduced [NADPH--hemoprotein reductase] + O2 = 11-hydroxy-(9Z,12Z)-octadecadienoate + oxidized [NADPH--hemoprotein reductase] + H2O + H(+). The protein operates within cofactor metabolism; retinol metabolism. Its pathway is steroid metabolism; cholesterol metabolism. It functions in the pathway lipid metabolism; arachidonate metabolism. A cytochrome P450 monooxygenase involved in the metabolism of various endogenous substrates, including fatty acids, steroid hormones and vitamins. Mechanistically, uses molecular oxygen inserting one oxygen atom into a substrate, and reducing the second into a water molecule, with two electrons provided by NADPH via cytochrome P450 reductase (NADPH--hemoprotein reductase). Catalyzes the hydroxylation of carbon-hydrogen bonds. Exhibits high catalytic activity for the formation of hydroxyestrogens from estrone (E1) and 17beta-estradiol (E2), namely 2-hydroxy E1 and E2. Metabolizes cholesterol toward 25-hydroxycholesterol, a physiological regulator of cellular cholesterol homeostasis. May act as a major enzyme for all-trans retinoic acid biosynthesis in the liver. Catalyzes two successive oxidative transformation of all-trans retinol to all-trans retinal and then to the active form all-trans retinoic acid. Primarily catalyzes stereoselective epoxidation of the last double bond of polyunsaturated fatty acids (PUFA), displaying a strong preference for the (R,S) stereoisomer. Catalyzes bisallylic hydroxylation and omega-1 hydroxylation of PUFA. May also participate in eicosanoids metabolism by converting hydroperoxide species into oxo metabolites (lipoxygenase-like reaction, NADPH-independent). Plays a role in the oxidative metabolism of xenobiotics. Catalyzes the N-hydroxylation of heterocyclic amines and the O-deethylation of phenacetin. Metabolizes caffeine via N3-demethylation. This chain is Cytochrome P450 1A2 (CYP1A2), found in Pongo abelii (Sumatran orangutan).